The primary structure comprises 585 residues: MAGUK p55 subfamily member 3 (585 aa).

2 consecutive L27 domains span residues 6 to 60 (EDSG…ERQS) and 61 to 118 (PTPV…FDPV). The PDZ domain maps to 137–218 (IVRLVKNKEP…SITLKIIPAT (82 aa)). The SH3 domain maps to 226 to 296 (ESKVFMRALF…PSKQFQERRL (71 aa)). Ser-307 bears the Phosphoserine mark. Residues 385–570 (SRLVVLIGSL…VCSQLRAVIE (186 aa)) enclose the Guanylate kinase-like domain. The tract at residues 510–530 (KRKTPPVSPDSEDPATPLDEQ) is disordered.

Belongs to the MAGUK family. Interacts with HTR2C; this interaction stabilizes the receptor at the plasma membrane and prevents the desensitization of the HTR2C receptor-mediated calcium response. Interacts with HTR2A. Interacts with HTR4. Interacts (via PDZ domain) with CADM1 (via C-terminus)Interacts (via PDZ domain) with CADM1; this interaction connects CADM1 with DLG1. Interacts (via Guanylate kinase-like domain) with PALS1. Interacts with DLG1 (via N-terminus); this interaction connects CADM1 with DLG1 and links CADM1 with the regulatory subunit of phosphoinositide-3-kinase (PI3K) by forming a multiprotein complex and participates in cell spreading.

Its subcellular location is the apical cell membrane. The protein localises to the cell membrane. It is found in the cell junction. The protein resides in the adherens junction. In terms of biological role, participates in cell spreading through the phosphoinositide-3-kinase (PI3K) pathway by connecting CADM1 to DLG1 and the regulatory subunit of phosphoinositide-3-kinase (PI3K). Stabilizes HTR2C at the plasma membrane and prevents its desensitization. May participates in the maintenance of adherens junctions. The sequence is that of MAGUK p55 subfamily member 3 from Rattus norvegicus (Rat).